We begin with the raw amino-acid sequence, 424 residues long: Histidine--tRNA ligase (424 aa).

It belongs to the class-II aminoacyl-tRNA synthetase family. Homodimer.

Its subcellular location is the cytoplasm. The catalysed reaction is tRNA(His) + L-histidine + ATP = L-histidyl-tRNA(His) + AMP + diphosphate + H(+). The protein is Histidine--tRNA ligase of Escherichia coli O139:H28 (strain E24377A / ETEC).